A 100-amino-acid chain; its full sequence is uncharacterized protein (100 aa).

This is an uncharacterized protein from Bacillus anthracis.